We begin with the raw amino-acid sequence, 132 residues long: Ribosome-binding factor A (132 aa).

It belongs to the RbfA family. In terms of assembly, monomer. Binds 30S ribosomal subunits, but not 50S ribosomal subunits or 70S ribosomes.

The protein resides in the cytoplasm. Functionally, one of several proteins that assist in the late maturation steps of the functional core of the 30S ribosomal subunit. Associates with free 30S ribosomal subunits (but not with 30S subunits that are part of 70S ribosomes or polysomes). Required for efficient processing of 16S rRNA. May interact with the 5'-terminal helix region of 16S rRNA. This Edwardsiella ictaluri (strain 93-146) protein is Ribosome-binding factor A.